The primary structure comprises 118 residues: Waprin-Enh1 (118 aa).

The N-terminal stretch at 1-24 (MKTLTGLLLVGLLALWIGLPSTSS) is a signal peptide. 2 WAP domains span residues 25-72 (KILF…RSCR) and 74-118 (PPVL…RICK). Intrachain disulfides connect Cys30–Cys63, Cys40–Cys67, Cys50–Cys62, Cys56–Cys71, Cys81–Cys109, Cys88–Cys113, Cys96–Cys108, and Cys102–Cys117.

Belongs to the venom waprin family. Expressed by the venom gland.

The protein localises to the secreted. Its function is as follows. Damages membranes of susceptible bacteria. Has no hemolytic activity. Not toxic to mice. Does not inhibit the proteinases elastase and cathepsin G. The chain is Waprin-Enh1 from Pseudoferania polylepis (Macleay's water snake).